Reading from the N-terminus, the 718-residue chain is 1-deoxy-D-xylulose-5-phosphate synthase 1, chloroplastic (718 aa).

The N-terminal 55 residues, 1–55 (MAFCALSFPAHISRATTPAPSDLQKSSSFSSRFYWGADLLRPSQYKVRKIQSGVY), are a transit peptide targeting the chloroplast. Thiamine diphosphate contacts are provided by residues histidine 143 and 184 to 186 (GHS). Residue aspartate 215 coordinates Mg(2+). Thiamine diphosphate-binding positions include 216–217 (GA), asparagine 244, tyrosine 365, and glutamate 447. Asparagine 244 serves as a coordination point for Mg(2+).

This sequence belongs to the transketolase family. DXPS subfamily. In terms of assembly, homodimer. The cofactor is Mg(2+). Thiamine diphosphate serves as cofactor. Expressed in trichomes, leaves, flowers, roots and stems.

The protein localises to the plastid. The protein resides in the chloroplast. The enzyme catalyses D-glyceraldehyde 3-phosphate + pyruvate + H(+) = 1-deoxy-D-xylulose 5-phosphate + CO2. Its pathway is metabolic intermediate biosynthesis; 1-deoxy-D-xylulose 5-phosphate biosynthesis; 1-deoxy-D-xylulose 5-phosphate from D-glyceraldehyde 3-phosphate and pyruvate: step 1/1. Catalyzes the acyloin condensation reaction between C atoms 2 and 3 of pyruvate and glyceraldehyde 3-phosphate to yield 1-deoxy-D-xylulose-5-phosphate (DXP). This is 1-deoxy-D-xylulose-5-phosphate synthase 1, chloroplastic from Cannabis sativa (Hemp).